The sequence spans 104 residues: N(4)-acetylcytidine amidohydrolase (104 aa).

The region spanning 7–93 (MTFFSRFEAD…EVIQEIYPGI (87 aa)) is the ASCH domain. The active-site Proton acceptor is the lysine 22. The active-site Nucleophile is threonine 25. The Proton donor role is filled by glutamate 75.

The protein belongs to the N(4)-acetylcytidine amidohydrolase family.

It carries out the reaction N(4)-acetylcytidine + H2O = cytidine + acetate + H(+). The catalysed reaction is N(4)-acetyl-2'-deoxycytidine + H2O = 2'-deoxycytidine + acetate + H(+). The enzyme catalyses N(4)-acetylcytosine + H2O = cytosine + acetate + H(+). In terms of biological role, catalyzes the hydrolysis of N(4)-acetylcytidine (ac4C). The polypeptide is N(4)-acetylcytidine amidohydrolase (Vibrio vulnificus (strain YJ016)).